The following is a 921-amino-acid chain: Glutamate receptor 3.7 (921 aa).

Residues 1 to 25 (MGLGIDPSVAITALIVVILVVPMDC) form the signal peptide. Topologically, residues 26 to 580 (QRPQLVNIGA…WIFLRPFTSR (555 aa)) are extracellular. 7 N-linked (GlcNAc...) asparagine glycosylation sites follow: Asn214, Asn300, Asn330, Asn369, Asn396, Asn478, and Asn568. A helical transmembrane segment spans residues 581–601 (LWCVVLVSFLVIAVVIWILEH). Residues 602–608 (RINEDFR) lie on the Cytoplasmic side of the membrane. The chain crosses the membrane as a helical span at residues 609-629 (GPPRRQLSTMLLFSFSTLFKR). The Cytoplasmic portion of the chain corresponds to 630 to 640 (NQEDTISNLAR). The chain crosses the membrane as a helical span at residues 641 to 661 (LVMIVWLFLLMVLTASYTANL). The Extracellular portion of the chain corresponds to 662-822 (TSILTVQQLP…PEPNQLHLKS (161 aa)). A helical membrane pass occupies residues 823-843 (FKGLYLVCIAITVSAFLVFVL). At 844-921 (RMIRQFVRYR…VQADTEVPRN (78 aa)) the chain is on the cytoplasmic side. Residues 896 to 921 (FRRSDDSNNNPSHVGEVQADTEVPRN) form a disordered region.

Belongs to the glutamate-gated ion channel (TC 1.A.10.1) family. May form heteromers. As to expression, expressed predominantly in leaves and siliques. Also detected in roots.

The protein localises to the membrane. Glutamate-gated receptor that probably acts as a non-selective cation channel. May be involved in light-signal transduction and calcium homeostasis via the regulation of calcium influx into cells. In Arabidopsis thaliana (Mouse-ear cress), this protein is Glutamate receptor 3.7 (GLR3.7).